The chain runs to 309 residues: HPr kinase/phosphorylase (309 aa).

Residues His138 and Lys159 contribute to the active site. 153 to 160 (GKSGVGKS) is a binding site for ATP. Residue Ser160 participates in Mg(2+) binding. The active-site Proton acceptor; for phosphorylation activity. Proton donor; for dephosphorylation activity is Asp177. Residues 201–210 (LEIRGLGIIN) form an important for the catalytic mechanism of both phosphorylation and dephosphorylation region. Glu202 is a Mg(2+) binding site. Residue Arg243 is part of the active site. The segment at 264 to 269 (PVRPGR) is important for the catalytic mechanism of dephosphorylation.

It belongs to the HPrK/P family. As to quaternary structure, homohexamer. Mg(2+) is required as a cofactor.

The enzyme catalyses [HPr protein]-L-serine + ATP = [HPr protein]-O-phospho-L-serine + ADP + H(+). It catalyses the reaction [HPr protein]-O-phospho-L-serine + phosphate + H(+) = [HPr protein]-L-serine + diphosphate. Catalyzes the ATP- as well as the pyrophosphate-dependent phosphorylation of a specific serine residue in HPr, a phosphocarrier protein of the phosphoenolpyruvate-dependent sugar phosphotransferase system (PTS). HprK/P also catalyzes the pyrophosphate-producing, inorganic phosphate-dependent dephosphorylation (phosphorolysis) of seryl-phosphorylated HPr (P-Ser-HPr). The two antagonistic activities of HprK/P are regulated by several intracellular metabolites, which change their concentration in response to the absence or presence of rapidly metabolisable carbon sources (glucose, fructose, etc.) in the growth medium. Also phosphorylates/dephosphorylates the HPr-like catabolite repression protein crh on a specific serine residue. Therefore, by controlling the phosphorylation state of HPr and crh, HPrK/P is a sensor enzyme that plays a major role in the regulation of carbon metabolism and sugar transport: it mediates carbon catabolite repression (CCR), and regulates PTS-catalyzed carbohydrate uptake and inducer exclusion. The chain is HPr kinase/phosphorylase from Geobacillus thermodenitrificans (strain NG80-2).